The following is a 436-amino-acid chain: Trigger factor (436 aa).

The 86-residue stretch at 164-249 (GDTVVIDYKG…IHEIKEKQLP (86 aa)) folds into the PPIase FKBP-type domain.

This sequence belongs to the FKBP-type PPIase family. Tig subfamily.

The protein resides in the cytoplasm. The enzyme catalyses [protein]-peptidylproline (omega=180) = [protein]-peptidylproline (omega=0). Involved in protein export. Acts as a chaperone by maintaining the newly synthesized protein in an open conformation. Functions as a peptidyl-prolyl cis-trans isomerase. The polypeptide is Trigger factor (Limosilactobacillus reuteri (strain DSM 20016) (Lactobacillus reuteri)).